The sequence spans 809 residues: Sucrose synthase 3 (809 aa).

Residues 277–755 (MVFNVVILSP…GLQRIYERYT (479 aa)) are GT-B glycosyltransferase.

It belongs to the glycosyltransferase 1 family. Plant sucrose synthase subfamily. As to expression, detected in the whole plant with highest expression in developing siliques, vasculature of cotyledons and stomatal guard cells. Also detected throughout the mature parts of the root but not in the expanding zone.

It catalyses the reaction an NDP-alpha-D-glucose + D-fructose = a ribonucleoside 5'-diphosphate + sucrose + H(+). Functionally, sucrose-cleaving enzyme that provides UDP-glucose and fructose for various metabolic pathways. Modulates metabolic homeostasis and direct carbon towards starch synthesis in developing seeds. This chain is Sucrose synthase 3 (SUS3), found in Arabidopsis thaliana (Mouse-ear cress).